Here is a 240-residue protein sequence, read N- to C-terminus: NDR1/HIN1-like protein 2 (240 aa).

Residues 57-77 form a helical membrane-spanning segment; that stretch reads NILIAVAVILGVAALILWLIF. N-linked (GlcNAc...) asparagine glycosylation is found at N109, N141, N151, and N223.

As to expression, expressed at low levels in roots, rosette leaves, cauline leaves, stems, flowers and siliques.

The protein resides in the cell membrane. Its function is as follows. May play a role in plant immunity. This is NDR1/HIN1-like protein 2 from Arabidopsis thaliana (Mouse-ear cress).